A 384-amino-acid polypeptide reads, in one-letter code: Autophagy-related protein 30 (384 aa).

Positions 1 to 63 (MFSRKQVQKR…ASPGQLRPRT (63 aa)) are disordered. Residues 13–27 (ELSSLHCSNSSNSLN) are compositionally biased toward low complexity. The segment covering 45–63 (RGNNRSDNVASPGQLRPRT) has biased composition (polar residues). Serine 112 carries the phosphoserine modification. The tract at residues 266 to 291 (VKHDKPSSPLPNYHNTLKQAPSSNSQ) is disordered. Positions 278–291 (YHNTLKQAPSSNSQ) are enriched in polar residues.

As to quaternary structure, interacts with ATG11, ATG17, ATG37, PEX3 and PEX14. Phosphorylation at Ser-112 is required for micro- and macropexophagy.

The protein resides in the vacuole lumen. The protein localises to the preautophagosomal structure. It localises to the peroxisome membrane. Its function is as follows. Acts as the peroxisome receptor for pexophagy. Required for both micropexophagy and macropexophagy, but not for the cytoplasm to vacuole transport (Cvt) or autophagy pathways. Required for functional micropexophagic apparatus (MIPA) and relocation of ATG11 to the peroxisome-sequestering arms of the vacuole. The polypeptide is Autophagy-related protein 30 (ATG30) (Komagataella phaffii (strain GS115 / ATCC 20864) (Yeast)).